Here is a 96-residue protein sequence, read N- to C-terminus: Transcriptional regulator ATRY (96 aa).

The GATA-type; atypical zinc finger occupies 1 to 12 (VICTACGQQVNQ). One can recognise an ADD domain in the interval 1–96 (VICTACGQQV…IAVCDSVLEN (96 aa)). The PHD-type; atypical zinc-finger motif lies at 27-82 (LICKRWCAEGGNLICCDSCHNAFCKKCIWRNLGRKEISKIMNEKNEWHCYICCPEP).

This sequence belongs to the SNF2/RAD54 helicase family. In terms of tissue distribution, expressed in developing and adult testis. Also weakly expressed in prostate and epididymis.

The protein resides in the nucleus. It catalyses the reaction ATP + H2O = ADP + phosphate + H(+). In terms of biological role, could be a global transcriptional regulator. Modifies gene expression by affecting chromatin. This is Transcriptional regulator ATRY (ATRY) from Notamacropus eugenii (Tammar wallaby).